Here is a 101-residue protein sequence, read N- to C-terminus: UPF0235 protein MmarC6_1603 (101 aa).

Belongs to the UPF0235 family.

The chain is UPF0235 protein MmarC6_1603 from Methanococcus maripaludis (strain C6 / ATCC BAA-1332).